The chain runs to 112 residues: Divalent-cation tolerance protein CutA (112 aa).

Residues C16, H83, and H84 each contribute to the Cu cation site.

The protein belongs to the CutA family. Homotrimer. Cu cation is required as a cofactor.

It localises to the cytoplasm. In terms of biological role, involved in resistance toward heavy metals. The chain is Divalent-cation tolerance protein CutA from Shigella flexneri.